A 661-amino-acid polypeptide reads, in one-letter code: UvrABC system protein B (661 aa).

One can recognise a Helicase ATP-binding domain in the interval 25–178 (EGILKGEKFQ…DEVIRELIRM (154 aa)). 38 to 45 (GVTGSGKT) serves as a coordination point for ATP. The Beta-hairpin motif lies at 91-114 (YYDYYQPEAYIPETDTYIEKDSSI). In terms of domain architecture, Helicase C-terminal spans 429–591 (QIDHLIGEIR…IVPQTVRKGI (163 aa)). The UVR domain maps to 625–660 (EEYIKELEQQMKRFAIELEFEKAAKIRDKIFELKKL).

The protein belongs to the UvrB family. Forms a heterotetramer with UvrA during the search for lesions. Interacts with UvrC in an incision complex.

The protein localises to the cytoplasm. Its function is as follows. The UvrABC repair system catalyzes the recognition and processing of DNA lesions. A damage recognition complex composed of 2 UvrA and 2 UvrB subunits scans DNA for abnormalities. Upon binding of the UvrA(2)B(2) complex to a putative damaged site, the DNA wraps around one UvrB monomer. DNA wrap is dependent on ATP binding by UvrB and probably causes local melting of the DNA helix, facilitating insertion of UvrB beta-hairpin between the DNA strands. Then UvrB probes one DNA strand for the presence of a lesion. If a lesion is found the UvrA subunits dissociate and the UvrB-DNA preincision complex is formed. This complex is subsequently bound by UvrC and the second UvrB is released. If no lesion is found, the DNA wraps around the other UvrB subunit that will check the other stand for damage. The polypeptide is UvrABC system protein B (Caldicellulosiruptor saccharolyticus (strain ATCC 43494 / DSM 8903 / Tp8T 6331)).